A 493-amino-acid chain; its full sequence is MSKKYIIALDQGTTSSRAIVFDHDTKMVASSQREFSQMYPQPGWVEHDAMEIWASQSSTLIEVLARADIHSEDVAAIGITNQRETTVVWDKVTGKPVYNAIVWQCRRSKAICDELKAQGLEDYIKQTTGLVLDPYFSGTKIKWILDNVEGVRERAEKGELLFGTIDTWLVWKLTEGKVHVTDPTNASRTMLFNIHTQQWDDKLLDAFDIPRSILPEVKPSSAIYGYTRIAGEGSHIAIAGMAGDQQSALFGQLCIEEGMAKNTYGTGCFLLMNTGVEAVQSQHGLLTTIAIGADGGINYALEGSVFMGGATVQWLRDELGLIRDAQDTEYFAKKVEDTNGVYLIPAFVGLGAPYWDPDARGALVGLTRGANRNHIIRAALEAIAYQSRDLLDAMSKDSCVELKQIKVDGGAVANDFLMQFQADITNVEVLRPELTETTALGAAFLAGLAVGFWDSTDELKHKAGIERNFTPQISMQKRDSLYKGWQEAVTRTR.

ADP is bound at residue Thr13. ATP-binding residues include Thr13, Thr14, and Ser15. Thr13 serves as a coordination point for sn-glycerol 3-phosphate. An ADP-binding site is contributed by Arg17. Sn-glycerol 3-phosphate is bound by residues Arg83, Glu84, Tyr135, and Asp244. Glycerol-binding residues include Arg83, Glu84, Tyr135, Asp244, and Gln245. Residues Thr266 and Gly309 each contribute to the ADP site. Residues Thr266, Gly309, Gln313, and Gly410 each coordinate ATP. Gly410 and Asn414 together coordinate ADP.

The protein belongs to the FGGY kinase family.

It carries out the reaction glycerol + ATP = sn-glycerol 3-phosphate + ADP + H(+). It functions in the pathway polyol metabolism; glycerol degradation via glycerol kinase pathway; sn-glycerol 3-phosphate from glycerol: step 1/1. Its activity is regulated as follows. Inhibited by fructose 1,6-bisphosphate (FBP). Key enzyme in the regulation of glycerol uptake and metabolism. Catalyzes the phosphorylation of glycerol to yield sn-glycerol 3-phosphate. The protein is Glycerol kinase of Shewanella pealeana (strain ATCC 700345 / ANG-SQ1).